We begin with the raw amino-acid sequence, 994 residues long: UPF0182 protein Strop_3729 (994 aa).

The next 7 membrane-spanning stretches (helical) occupy residues 18-38 (IGVL…VQAW), 61-81 (LLLF…NLWL), 110-130 (IGLW…LSAQ), 174-194 (FTAV…FGGI), 209-229 (AHLS…YVLD), 260-280 (ILAY…NAWM), and 283-303 (LVWP…IGGI). Disordered regions lie at residues 891–934 (GEQA…AEAA) and 970–994 (FEQA…SPGG). Pro residues predominate over residues 897–926 (PSPPPSDDETPPSPTPTPTPTTPSVTPPPL).

The protein belongs to the UPF0182 family.

The protein localises to the cell membrane. This is UPF0182 protein Strop_3729 from Salinispora tropica (strain ATCC BAA-916 / DSM 44818 / JCM 13857 / NBRC 105044 / CNB-440).